Here is an 873-residue protein sequence, read N- to C-terminus: Zinc fingers and homeoboxes protein 1 (873 aa).

The disordered stretch occupies residues 1-63 (MASRRKSTTP…ESVDSDNQQN (63 aa)). The span at 18-30 (QDPDLELISDLEE) shows a compositional bias: acidic residues. Threonine 36 is subject to Phosphothreonine. Phosphoserine is present on residues serine 45, serine 47, and serine 48. C2H2-type zinc fingers lie at residues 70–93 (YECKYCTFQTPDLNMFTFHVDSEH) and 102–125 (YVCVECNFLTKRYDALSEHNLKYH). Lysine 159 is covalently cross-linked (Glycyl lysine isopeptide (Lys-Gly) (interchain with G-Cter in SUMO2)). The disordered stretch occupies residues 198-247 (VHHNSAEGTSEEKENGVKASREENAENTSSSASESNTSTSTVNQVHPSPA). Position 202 is a phosphoserine (serine 202). Positions 207 to 221 (SEEKENGVKASREEN) are enriched in basic and acidic residues. Positions 223–238 (ENTSSSASESNTSTST) are enriched in low complexity. A required for dimerization region spans residues 272 to 432 (NSNLVPKVLI…QTNVQKSQVP (161 aa)). Positions 272 to 564 (NSNLVPKVLI…SQPKQSWNPF (293 aa)) are required for interaction with NFYA. The homeobox 1 DNA-binding region spans 284–346 (NSIPTYNAAL…LKHGVSWTPE (63 aa)). The disordered stretch occupies residues 430-455 (QVPAAQPAAETKPATAAVPSSPSVRP). Residues lysine 441 and lysine 485 each participate in a glycyl lysine isopeptide (Lys-Gly) (interchain with G-Cter in SUMO2) cross-link. The segment at residues 464 to 526 (SFGIRAKKTK…YNQRNSKSNQ (63 aa)) is a DNA-binding region (homeobox 2). 3 disordered regions span residues 540–568 (IDSSDETPEPPAAAASQPKQSWNPFPDFA), 627–664 (DEKVEVDESNVGSSKEEPGENSPGDEAVAPKSAGTGKI), and 731–767 (SSSLNGLSSLRKRGRGRPKGRGRGRPRGRPRGGKRMN). The span at 551–560 (AAAASQPKQS) shows a compositional bias: low complexity. Positions 569 to 631 (PQKFKEKTAE…TKALKDEKVE (63 aa)) form a DNA-binding region, homeobox 3. Residue lysine 629 forms a Glycyl lysine isopeptide (Lys-Gly) (interchain with G-Cter in SUMO2) linkage. Residue serine 648 is modified to Phosphoserine. A DNA-binding region (homeobox 4) is located at residues 660–722 (GTGKICKKTP…YAWKNGNLKW (63 aa)). Residues 734–768 (LNGLSSLRKRGRGRPKGRGRGRPRGRPRGGKRMNT) are required for nuclear localization. Residues 740–764 (LRKRGRGRPKGRGRGRPRGRPRGGK) show a composition bias toward basic residues. Serine 774 carries the post-translational modification Phosphoserine. The homeobox 5 DNA-binding region spans 777–832 (KFKTGTAILKDYYLKHKFLNEQDLDELVNRSHMGYEQVREWFAERQRRSELGIELF). The interval 829 to 873 (IELFEENEEEDEVIDDQEEDEEETDDSDTWEPPRHVKRKLSKSDD) is disordered. Residues 831 to 857 (LFEENEEEDEVIDDQEEDEEETDDSDT) show a composition bias toward acidic residues. The segment at 831-873 (LFEENEEEDEVIDDQEEDEEETDDSDTWEPPRHVKRKLSKSDD) is required for repressor activity. The span at 863–873 (HVKRKLSKSDD) shows a compositional bias: basic residues.

Belongs to the ZHX family. Forms homodimers. Heterodimer (via HD1 domain) with ZHX2 (via HD1 domain). Also forms a heterodimer with ZHX3 which is a prerequisite for repressor activity. Interacts with ATF7IP and NFYA. Interacts (via homeobox domains) with DNMT3B (via PWWP domain). In terms of tissue distribution, ubiquitously expressed.

It localises to the nucleus. Acts as a transcriptional repressor. Increases DNMT3B-mediated repressive transcriptional activity when DNMT3B is tethered to DNA. May link molecule between DNMT3B and other co-repressor proteins. This chain is Zinc fingers and homeoboxes protein 1 (Zhx1), found in Rattus norvegicus (Rat).